Here is a 70-residue protein sequence, read N- to C-terminus: Putative membrane protein insertion efficiency factor (70 aa).

This sequence belongs to the UPF0161 family.

It is found in the cell inner membrane. Its function is as follows. Could be involved in insertion of integral membrane proteins into the membrane. This chain is Putative membrane protein insertion efficiency factor, found in Geobacter sp. (strain M21).